The primary structure comprises 538 residues: Phosphoenolpyruvate carboxykinase (ATP) (538 aa).

Substrate-binding residues include R64, Y205, and K211. ATP is bound by residues K211, H230, and 246–254; that span reads GLSGTGKTT. Mn(2+) is bound by residues K211 and H230. Position 267 (D267) interacts with Mn(2+). Residues E295, R331, 447-448, and T453 each bind ATP; that span reads RI. R331 contributes to the substrate binding site.

The protein belongs to the phosphoenolpyruvate carboxykinase (ATP) family. As to quaternary structure, monomer. Requires Mn(2+) as cofactor.

The protein resides in the cytoplasm. The enzyme catalyses oxaloacetate + ATP = phosphoenolpyruvate + ADP + CO2. It participates in carbohydrate biosynthesis; gluconeogenesis. Involved in the gluconeogenesis. Catalyzes the conversion of oxaloacetate (OAA) to phosphoenolpyruvate (PEP) through direct phosphoryl transfer between the nucleoside triphosphate and OAA. The polypeptide is Phosphoenolpyruvate carboxykinase (ATP) (Pasteurella multocida (strain Pm70)).